The primary structure comprises 524 residues: Cytokinin dehydrogenase 7 (524 aa).

One can recognise an FAD-binding PCMH-type domain in the interval 58 to 238; it reads NCVKPLAVVR…TRARVLLQPA (181 aa). Residues Ala-91, Gly-93, Asn-94, and Gly-95 each contribute to the FAD site. The residue at position 96 (His-96) is a Pros-8alpha-FAD histidine. FAD contacts are provided by Ser-97, Gln-101, Asp-162, Thr-167, Ser-173, Val-177, Ile-228, Tyr-479, Ser-514, and Gln-517.

It belongs to the oxygen-dependent FAD-linked oxidoreductase family. It depends on FAD as a cofactor. Expressed in the vasculature of roots, hypocotyls, cotyledons and leaves of young seedlings. In flowers, expressed in the transmitting tissue of the gynoecium prior to pollination. Expressed in the mature embryo sac with maximum activity in the egg cell and the synergids.

Its subcellular location is the cytoplasm. The protein localises to the cytosol. It carries out the reaction N(6)-dimethylallyladenine + A + H2O = 3-methyl-2-butenal + adenine + AH2. In terms of biological role, catalyzes the oxidation of cytokinins, a family of N(6)-substituted adenine derivatives that are plant hormones, where the substituent is an isopentenyl group. Catalyzes in vitro the oxidation of various types of cytokinin nucleotides that are known as direct products of cytokinin biosynthesis. The polypeptide is Cytokinin dehydrogenase 7 (CKX7) (Arabidopsis thaliana (Mouse-ear cress)).